Consider the following 872-residue polypeptide: UPF0182 protein Noc_0961 (872 aa).

7 helical membrane-spanning segments follow: residues 8–28 (FLIL…AGFE), 56–76 (LVVF…NFWV), 109–129 (SLWI…WPLF), 159–179 (LFSF…FLLL), 207–227 (WHLS…FFLQ), 254–274 (PFIW…LLFI), and 282–302 (TLAV…FHFL).

This sequence belongs to the UPF0182 family.

Its subcellular location is the cell membrane. The sequence is that of UPF0182 protein Noc_0961 from Nitrosococcus oceani (strain ATCC 19707 / BCRC 17464 / JCM 30415 / NCIMB 11848 / C-107).